The primary structure comprises 2799 residues: E3 ubiquitin-protein ligase UBR5 (2799 aa).

Position 2 is an N-acetylthreonine (T2). Over residues D77 to D88 the composition is skewed to basic and acidic residues. The segment at D77–Q175 is disordered. A compositionally biased stretch (polar residues) spans G89–S110. At S110 the chain carries Phosphoserine. Residues G135 to S144 show a composition bias toward gly residues. One can recognise a UBA domain in the interval V184–R226. S327 is subject to Phosphoserine. Basic and acidic residues predominate over residues F328–N347. Residues F328–S352 are disordered. Phosphoserine occurs at positions 352 and 578. The interval P579–E648 is disordered. Residues K583 to K604 are compositionally biased toward basic and acidic residues. S612 carries the post-translational modification Phosphoserine. The span at A614–S628 shows a compositional bias: low complexity. At T637 the chain carries Phosphothreonine. Residues S808, S928, and S1018 each carry the phosphoserine modification. 2 disordered regions span residues A999 to P1031 and T1052 to V1075. Residues V1017–P1031 are compositionally biased toward pro residues. Residues T1052 to P1073 are compositionally biased toward polar residues. 2 positions are modified to phosphothreonine: T1115 and T1135. The UBR-type zinc finger occupies D1177–A1245. Zn(2+) contacts are provided by C1179, C1196, C1199, C1208, C1211, C1215, H1216, and H1219. S1227 is modified (phosphoserine). Zn(2+) contacts are provided by C1232, C1234, and C1240. The tract at residues R1299–D1318 is disordered. Phosphoserine occurs at positions 1308, 1355, 1375, and 1481. The segment at S1515–S1740 is disordered. The span at S1524 to S1537 shows a compositional bias: low complexity. The segment covering Y1538–P1553 has biased composition (polar residues). Position 1549 is a phosphoserine (S1549). 2 stretches are compositionally biased toward acidic residues: residues E1559–V1574 and H1605–L1614. The span at N1629–G1638 shows a compositional bias: polar residues. 3 stretches are compositionally biased toward low complexity: residues S1641–V1657, S1668–S1681, and A1726–S1740. Phosphothreonine is present on T1736. S1741 carries the phosphoserine modification. Y1746 carries the post-translational modification Phosphotyrosine. At S1780 the chain carries Phosphoserine. Residues L1859–A1890 are disordered. The span at A1879–A1890 shows a compositional bias: basic and acidic residues. The residue at position 1969 (T1969) is a Phosphothreonine. The interval G1984–P2021 is disordered. The span at I1985 to T1998 shows a compositional bias: acidic residues. Phosphoserine occurs at positions 1990, 2026, and 2028. T2030 carries the phosphothreonine modification. S2076 is modified (phosphoserine). Residues R2117 to H2142 are disordered. Position 2213 is a phosphothreonine (T2213). Phosphoserine is present on residues S2241 and S2289. The interval H2323 to A2392 is disordered. Basic and acidic residues-rich tracts occupy residues N2332–R2348 and S2356–L2368. The PABC domain occupies P2377 to R2454. The region spanning L2462–V2799 is the HECT domain. Phosphoserine is present on residues S2469, S2484, and S2486. The tract at residues V2473–D2493 is disordered. C2768 (glycyl thioester intermediate) is an active-site residue.

This sequence belongs to the UBR5 family. In terms of assembly, homotetramer; composed of a dimer of dimers. Associates with CDK9 and TFIIS/TCEA1 and forms a transcription regulatory complex made of CDK9, RNAP II, UBR5 and TFIIS/TCEA1 that can stimulate target gene transcription (e.g. gamma fibrinogen/FGG) by recruiting their promoters. Associates with the E3 ligase complex containing DYRK2, EDD/UBR5, DDB1 and DCAF1 proteins (EDVP complex). Binds TOPBP1. Interacts with PIH1D1. Interacts with CIB1. (Microbial infection) Interacts with human T-cell leukemia virus 1/HTLV-1 protein HBZ; this interaction modulates HBZ stability. In terms of tissue distribution, widely expressed. Most abundant in testis and expressed at high levels in brain, pituitary and kidney.

Its subcellular location is the nucleus. The protein localises to the cytoplasm. It carries out the reaction S-ubiquitinyl-[E2 ubiquitin-conjugating enzyme]-L-cysteine + [acceptor protein]-L-lysine = [E2 ubiquitin-conjugating enzyme]-L-cysteine + N(6)-ubiquitinyl-[acceptor protein]-L-lysine.. Its pathway is protein modification; protein ubiquitination. E3 ubiquitin-protein ligase involved in different protein quality control pathways in the cytoplasm and nucleus. Mainly acts as a ubiquitin chain elongator that extends pre-ubiquitinated substrates. Component of the N-end rule pathway: ubiquitinates proteins bearing specific N-terminal residues that are destabilizing according to the N-end rule, leading to their degradation. Recognizes type-1 N-degrons, containing positively charged amino acids (Arg, Lys and His). Together with UBR4, part of a cytoplasm protein quality control pathway that prevents protein aggregation by catalyzing assembly of heterotypic 'Lys-11'-/'Lys-48'-linked branched ubiquitin chains on aggregated proteins, leading to substrate recognition by the segregase p97/VCP and degradation by the proteasome: UBR5 is probably branching multiple 'Lys-48'-linked chains of substrates initially modified with mixed conjugates by UBR4. Together with ITCH, catalyzes 'Lys-48'-/'Lys-63'-branched ubiquitination of TXNIP, leading to its degradation: UBR5 mediates branching of 'Lys-48'-linked chains of substrates initially modified with 'Lys-63'-linked conjugates by ITCH. Catalytic component of a nuclear protein quality control pathway that mediates ubiquitination and degradation of unpaired transcription factors (i.e. transcription factors that are not assembled into functional multiprotein complexes): specifically recognizes and binds degrons that are not accessible when transcription regulators are associated with their coactivators. Ubiquitinates various unpaired transcription regulator (MYC, SUPT4H1, SUPT5H, CDC20 and MCRS1), as well as ligand-bound nuclear receptors (ESR1, NR1H3, NR3C1, PGR, RARA, RXRA AND VDR) that are not associated with their nuclear receptor coactivators (NCOAs). Involved in maturation and/or transcriptional regulation of mRNA by mediating polyubiquitination and activation of CDK9. Also acts as a regulator of DNA damage response by acting as a suppressor of RNF168, an E3 ubiquitin-protein ligase that promotes accumulation of 'Lys-63'-linked histone H2A and H2AX at DNA damage sites, thereby acting as a guard against excessive spreading of ubiquitinated chromatin at damaged chromosomes. Regulates DNA topoisomerase II binding protein (TopBP1) in the DNA damage response. Ubiquitinates acetylated PCK1. Acts as a positive regulator of the canonical Wnt signaling pathway by mediating (1) ubiquitination and stabilization of CTNNB1, and (2) 'Lys-48'-linked ubiquitination and degradation of TLE3. Promotes disassembly of the mitotic checkpoint complex (MCC) from the APC/C complex by catalyzing ubiquitination of BUB1B, BUB3 and CDC20. Plays an essential role in extraembryonic development. Required for the maintenance of skeletal tissue homeostasis by acting as an inhibitor of hedgehog (HH) signaling. The chain is E3 ubiquitin-protein ligase UBR5 (UBR5) from Homo sapiens (Human).